We begin with the raw amino-acid sequence, 150 residues long: Large ribosomal subunit protein bL9 (150 aa).

Belongs to the bacterial ribosomal protein bL9 family.

Functionally, binds to the 23S rRNA. The protein is Large ribosomal subunit protein bL9 of Neisseria meningitidis serogroup C / serotype 2a (strain ATCC 700532 / DSM 15464 / FAM18).